Consider the following 368-residue polypeptide: Phospho-N-acetylmuramoyl-pentapeptide-transferase (368 aa).

9 consecutive transmembrane segments (helical) span residues 2–22 (IALI…TPLL), 51–71 (TLGG…SALY), 80–100 (PSWS…LGFI), 117–137 (GGKF…ALLI), 167–187 (VAII…TNAV), 193–213 (LDGL…IIAF), 234–254 (PLDL…FLWY), 271–291 (LGGL…AVVL), and 340–360 (FWMI…GDWV).

Belongs to the glycosyltransferase 4 family. MraY subfamily. Mg(2+) serves as cofactor.

It is found in the cell membrane. It catalyses the reaction UDP-N-acetyl-alpha-D-muramoyl-L-alanyl-gamma-D-glutamyl-meso-2,6-diaminopimeloyl-D-alanyl-D-alanine + di-trans,octa-cis-undecaprenyl phosphate = di-trans,octa-cis-undecaprenyl diphospho-N-acetyl-alpha-D-muramoyl-L-alanyl-D-glutamyl-meso-2,6-diaminopimeloyl-D-alanyl-D-alanine + UMP. Its pathway is cell wall biogenesis; peptidoglycan biosynthesis. Catalyzes the initial step of the lipid cycle reactions in the biosynthesis of the cell wall peptidoglycan: transfers peptidoglycan precursor phospho-MurNAc-pentapeptide from UDP-MurNAc-pentapeptide onto the lipid carrier undecaprenyl phosphate, yielding undecaprenyl-pyrophosphoryl-MurNAc-pentapeptide, known as lipid I. This Bifidobacterium longum (strain DJO10A) protein is Phospho-N-acetylmuramoyl-pentapeptide-transferase.